Reading from the N-terminus, the 249-residue chain is Undecaprenyl-diphosphatase (249 aa).

The next 8 membrane-spanning stretches (helical) occupy residues 11–31, 35–55, 74–94, 101–121, 135–155, 175–195, 208–228, and 229–249; these read GLTE…TAIF, PDVG…VIFV, ITLS…GIFF, IFSE…FMLL, IPYL…LPGI, AVKY…VLEM, FIVA…MVIA, and GKLK…IFYI.

It belongs to the UppP family.

It localises to the cell membrane. The enzyme catalyses di-trans,octa-cis-undecaprenyl diphosphate + H2O = di-trans,octa-cis-undecaprenyl phosphate + phosphate + H(+). Functionally, catalyzes the dephosphorylation of undecaprenyl diphosphate (UPP). This Methanococcus vannielii (strain ATCC 35089 / DSM 1224 / JCM 13029 / OCM 148 / SB) protein is Undecaprenyl-diphosphatase.